The sequence spans 308 residues: F420-non-reducing hydrogenase subunit G (308 aa).

The protein belongs to the [NiFe]/[NiFeSe] hydrogenase small subunit family. In terms of assembly, the F420-non-reducing hydrogenase is composed of three subunits; MvhA, MvhD and MvhG. It forms a complex with the heterodisulfide reductase (hdr).

Functionally, part of a complex that provides reducing equivalents for heterodisulfide reductase. This chain is F420-non-reducing hydrogenase subunit G (mvhG), found in Methanothermobacter thermautotrophicus (strain ATCC 29096 / DSM 1053 / JCM 10044 / NBRC 100330 / Delta H) (Methanobacterium thermoautotrophicum).